A 173-amino-acid polypeptide reads, in one-letter code: NADH-ubiquinone oxidoreductase chain 6 (173 aa).

5 helical membrane-spanning segments follow: residues 1–21 (MTYF…AVAS), 27–47 (YGVV…LSLG), 48–68 (VSFV…VVFV), 87–107 (VVGY…VGGL), and 139–159 (CGVG…FVVL).

Belongs to the complex I subunit 6 family.

The protein localises to the mitochondrion membrane. The enzyme catalyses a ubiquinone + NADH + 5 H(+)(in) = a ubiquinol + NAD(+) + 4 H(+)(out). Functionally, core subunit of the mitochondrial membrane respiratory chain NADH dehydrogenase (Complex I) that is believed to belong to the minimal assembly required for catalysis. Complex I functions in the transfer of electrons from NADH to the respiratory chain. The immediate electron acceptor for the enzyme is believed to be ubiquinone. This chain is NADH-ubiquinone oxidoreductase chain 6 (MT-ND6), found in Synthliboramphus wumizusume (Japanese murrelet).